Consider the following 130-residue polypeptide: uncharacterized protein (130 aa).

This is an uncharacterized protein from Pyrococcus horikoshii (strain ATCC 700860 / DSM 12428 / JCM 9974 / NBRC 100139 / OT-3).